The chain runs to 441 residues: 3-phosphoshikimate 1-carboxyvinyltransferase (441 aa).

Residues 1–24 (MSGTGQSDDPRELKAGGSLQGRVK) are disordered. Residues K29, S30, and R34 each contribute to the 3-phosphoshikimate site. Residue K29 participates in phosphoenolpyruvate binding. Phosphoenolpyruvate is bound by residues G103 and R132. 3-phosphoshikimate is bound by residues S177, Q179, D328, and K355. Q179 provides a ligand contact to phosphoenolpyruvate. Catalysis depends on D328, which acts as the Proton acceptor. 2 residues coordinate phosphoenolpyruvate: R359 and R401.

This sequence belongs to the EPSP synthase family. In terms of assembly, monomer.

It is found in the cytoplasm. It catalyses the reaction 3-phosphoshikimate + phosphoenolpyruvate = 5-O-(1-carboxyvinyl)-3-phosphoshikimate + phosphate. It participates in metabolic intermediate biosynthesis; chorismate biosynthesis; chorismate from D-erythrose 4-phosphate and phosphoenolpyruvate: step 6/7. In terms of biological role, catalyzes the transfer of the enolpyruvyl moiety of phosphoenolpyruvate (PEP) to the 5-hydroxyl of shikimate-3-phosphate (S3P) to produce enolpyruvyl shikimate-3-phosphate and inorganic phosphate. The chain is 3-phosphoshikimate 1-carboxyvinyltransferase from Synechococcus sp. (strain CC9605).